The sequence spans 512 residues: Alpha-amylase (512 aa).

An N-terminal signal peptide occupies residues 1–15 (MKLFVLIALFGLGFA). 3 disulfide bridges follow: cysteine 43–cysteine 101, cysteine 85–cysteine 130, and cysteine 156–cysteine 175. Ca(2+)-binding residues include asparagine 115, arginine 173, and aspartate 182. A chloride-binding site is contributed by arginine 210. Aspartate 212 acts as the Nucleophile in catalysis. Histidine 216 contacts Ca(2+). Glutamate 248 acts as the Proton donor in catalysis. Arginine 352 lines the chloride pocket. Disulfide bonds link cysteine 394–cysteine 400 and cysteine 466–cysteine 478. An N-linked (GlcNAc...) asparagine glycan is attached at asparagine 496.

This sequence belongs to the glycosyl hydrolase 13 family. It depends on Ca(2+) as a cofactor. Requires chloride as cofactor.

It localises to the secreted. The catalysed reaction is Endohydrolysis of (1-&gt;4)-alpha-D-glucosidic linkages in polysaccharides containing three or more (1-&gt;4)-alpha-linked D-glucose units.. Its function is as follows. Catalyzes the hydrolysis of alpha-1,4 glycosidic linkages in starch, glycogen and similar oligosaccharides. The chain is Alpha-amylase from Oryzias latipes (Japanese rice fish).